A 559-amino-acid polypeptide reads, in one-letter code: Branched-chain-amino-acid aminotransferase-like protein 2 (559 aa).

Belongs to the class-IV pyridoxal-phosphate-dependent aminotransferase family.

This chain is Branched-chain-amino-acid aminotransferase-like protein 2, found in Arabidopsis thaliana (Mouse-ear cress).